Consider the following 192-residue polypeptide: Small ribosomal subunit protein bS16 (192 aa).

Residues 149–161 (EKKAAEAKAKAEA) show a composition bias toward basic and acidic residues. Residues 149–192 (EKKAAEAKAKAEAEAAAAAEEATETEETPMEAAAEEAPAAESAE) form a disordered region. Over residues 178–192 (MEAAAEEAPAAESAE) the composition is skewed to low complexity.

This sequence belongs to the bacterial ribosomal protein bS16 family.

This Porphyromonas gingivalis (strain ATCC 33277 / DSM 20709 / CIP 103683 / JCM 12257 / NCTC 11834 / 2561) protein is Small ribosomal subunit protein bS16.